Reading from the N-terminus, the 589-residue chain is Alpha-1,2-mannosyltransferase MNN22 (589 aa).

Residues 1–16 (MGSIFKDGRRILVRPK) lie on the Cytoplasmic side of the membrane. Residues 17 to 33 (SLIICLCLISIIFTQLI) traverse the membrane as a helical segment. Topologically, residues 34 to 589 (RYQYQLIADE…NTIAWLGKKT (556 aa)) are extracellular. Residues 50–77 (EDHSSSQSLKNTKLNSTRSSSPISPPKS) form a disordered region. A compositionally biased stretch (polar residues) spans 54 to 71 (SSQSLKNTKLNSTRSSSP). Asn-64, Asn-332, and Asn-530 each carry an N-linked (GlcNAc...) asparagine glycan.

The protein belongs to the MNN1/MNT family.

It is found in the golgi apparatus membrane. Its pathway is protein modification; protein glycosylation. In terms of biological role, alpha-1,2-mannosyltransferase required for cell wall integrity. Responsible for addition of the first alpha-1,2-linked mannose to form the branches on the mannan backbone of oligosaccharides. Addition of alpha-1,2-mannose is required for stabilization of the alpha-1,6-mannose backbone and hence regulates mannan fibril length; and is important for both immune recognition and virulence. The protein is Alpha-1,2-mannosyltransferase MNN22 (MNN22) of Candida albicans (strain SC5314 / ATCC MYA-2876) (Yeast).